Here is a 129-residue protein sequence, read N- to C-terminus: F(420)H(2) dehydrogenase subunit A (129 aa).

The next 3 membrane-spanning stretches (helical) occupy residues 9 to 29 (IIDS…MPPM), 64 to 84 (FNVE…EVLF), and 95 to 115 (HGIT…LLFG).

Belongs to the complex I subunit 3 family. In terms of assembly, the FPO complex is composed of at least 13 different subunits. FpoA, FpoH, FpoJ, FpoK, FpoL, FpoM and FpoN proteins constitute the membrane sector of the complex.

It is found in the cell membrane. The enzyme catalyses methanophenazine + reduced coenzyme F420-(gamma-L-Glu)(n) = dihydromethanophenazine + oxidized coenzyme F420-(gamma-L-Glu)(n) + H(+). Functionally, component of the F(420)H(2) dehydrogenase (FPO complex) which is part of the energy-conserving F(420)H(2):heterodisulfide oxidoreductase system. The membrane-bound electron transfer system of the complex plays an important role in the metabolism of methylotrophic methanogens when the organisms grow on methanol or methylamines. Catalyzes the oxidation of methanophenazine to dihydromethanophenazine. It shuttles electrons from F(420)H(2), via FAD and iron-sulfur (Fe-S) centers, to methanophenazine (an electron carrier in the membrane). It couples the redox reaction to proton translocation (for every two electrons transferred, two hydrogen ions are translocated across the cytoplasmic membrane), and thus conserves the redox energy in a proton gradient. It also catalyzes the oxidation of F(420)H(2) with quinones such as 2,3-dimethyl-1,4-naphthoquinone, 2-methyl-1,4-naphthoquinone and tetramethyl-p-benzoquinone. This is F(420)H(2) dehydrogenase subunit A (fpoA) from Methanosarcina mazei (strain ATCC BAA-159 / DSM 3647 / Goe1 / Go1 / JCM 11833 / OCM 88) (Methanosarcina frisia).